A 41-amino-acid polypeptide reads, in one-letter code: Photosystem I reaction center subunit IX (41 aa).

Residues 7–27 (YLSTVPVVFAIWLTFTAGLII) traverse the membrane as a helical segment.

This sequence belongs to the PsaJ family.

The protein localises to the plastid. It is found in the chloroplast thylakoid membrane. In terms of biological role, may help in the organization of the PsaE and PsaF subunits. The polypeptide is Photosystem I reaction center subunit IX (Bigelowiella natans (Pedinomonas minutissima)).